Consider the following 343-residue polypeptide: Transmembrane protein 120A (343 aa).

Residues 1 to 132 are Cytoplasmic-facing; the sequence is MQPPPPGPLG…KQAKFAYKDE (132 aa). Residue Lys130 coordinates CoA. A helical transmembrane segment spans residues 133-152; that stretch reads YEKFKLYLTIILILISFTCR. At 153 to 158 the chain is on the extracellular side; that stretch reads FLLNSR. A helical transmembrane segment spans residues 159–177; it reads VTDAAFNFLLVWYYCTLTI. Over 178–190 the chain is Cytoplasmic; it reads RESILINNGSRIK. CoA is bound by residues Ser187 and Arg188. The chain crosses the membrane as a helical span at residues 191–209; sequence GWWVFHHYVSTFLSGVMLT. Residues 210–218 are Extracellular-facing; it reads WPDGLMYQK. A helical transmembrane segment spans residues 219-240; it reads FRNQFLSFSMYQSFVQFLQYYY. The CoA site is built by Gln237, Tyr240, Gln241, and His283. Topologically, residues 241–270 are cytoplasmic; it reads QSGCLYRLRALGERHTMDLTVEGFQSWMWR. A helical transmembrane segment spans residues 271-294; the sequence is GLTFLLPFLFFGHFWQLFNALTLF. Residues 295-304 are Extracellular-facing; that stretch reads NLAQDPQCKE. Residues 305–330 form a helical membrane-spanning segment; that stretch reads WQVLMCGFPFLLLFLGNFFTTLRVVH. The Cytoplasmic portion of the chain corresponds to 331-343; the sequence is HKFHSQRHGSKKD. Lys332 contributes to the CoA binding site.

This sequence belongs to the TMEM120 family. As to quaternary structure, homodimer. Forms heterooligomer with TMEM120B. Interacts with PKD2; TMEM120A inhibits PKD2 channel activity through the physical association of PKD2 with TMEM120A. Interacts (via C-terminal domain) with STING1; regulates the trafficking of STING1 from the ER to the ER-Golgi intermediate compartment to elicit antiviral effects. In terms of tissue distribution, expressed in nociceptors.

Its subcellular location is the cell membrane. The protein localises to the nucleus inner membrane. It localises to the endoplasmic reticulum. Functionally, multifunctional protein involved in mechanosensation, and plays an essential role in lipid metabolism and adipocyte differentiation. May function as a potential ion channel involved in sensing mechanical stimuli. Mediates the mechanosensitivity of the PKD2-TMEM120A channel complex through direct physical interaction. TMEM120A seems to affect mechanosensation by inhibiting PIEZO2 channels, possibly by altering cellular lipid content. TMEM120A is structurally similar to a lipid-modifying enzyme, ELOVL7, and contains a bound coenzyme A molecule, which suggests it might function as an enzyme in lipid metabolism. Additionnaly, implicated in innate immune response against Zika virus. Acts as a key activator of the antiviral signaling involving STING1. This Homo sapiens (Human) protein is Transmembrane protein 120A.